The following is a 429-amino-acid chain: MKLQKPKGTQDILPAESAKWQYVEGFAREIFKRYNYAEVRTPIFEHYEVISRSVGDTTDIVTKEMYDFYDKGDRHITLRPEGTAPVVRSYVENKLFAPEVQKPSKFYYMGPMFRYERPQAGRLRQFHQIGVECFGSSNPATDVETIVMAAHFLKEIGIQGVKLHLNTLGNPESRAAYRQALIDYLTPLKETLSKDSQRRLEENPLRVLDSKEKEDKVAVENAPSILDFLDEESQTHFDAVRQMLENLGVDYIIDTNMVRGLDYYNHTIFEFITEIEGNDLTVCAGGRYDGLVAYFGGPETAGFGFGLGVERLLLILEKQGVALPIENALDVYIAVLGDGANVKALELVQALRQQGFKAERDYLNRKLKAQFKSADVFAAKTLITLGESEVESGQVTVKNNQTREEVQVSLETISQNFSEIFEKLGFYTQ.

This sequence belongs to the class-II aminoacyl-tRNA synthetase family. In terms of assembly, homodimer.

It localises to the cytoplasm. It carries out the reaction tRNA(His) + L-histidine + ATP = L-histidyl-tRNA(His) + AMP + diphosphate + H(+). This is Histidine--tRNA ligase from Streptococcus pneumoniae (strain Taiwan19F-14).